A 197-amino-acid chain; its full sequence is Pinin homolog 1 (197 aa).

The segment at 30–73 (LDGKVNNEDSHMEIDQPEGSMEEDDHRQVKEKNTSENSVEQKRG) is disordered. Composition is skewed to basic and acidic residues over residues 34–43 (VNNEDSHMEI) and 53–71 (DDHRQVKEKNTSENSVEQK).

It belongs to the pinin family.

It is found in the nucleus. The protein resides in the cytoplasm. Functionally, transcriptional activator that may participate in the regulation of mRNA splicing. In Schizosaccharomyces pombe (strain 972 / ATCC 24843) (Fission yeast), this protein is Pinin homolog 1 (pnn1).